The chain runs to 162 residues: Phosphopantetheine adenylyltransferase (162 aa).

Position 11 (Ser-11) interacts with substrate. Residues 11–12 (SF) and His-19 each bind ATP. Lys-43, Val-76, and Arg-90 together coordinate substrate. ATP-binding positions include 91 to 93 (GLR), Glu-101, and 126 to 132 (HLYISSS).

It belongs to the bacterial CoaD family. Homohexamer. The cofactor is Mg(2+).

The protein resides in the cytoplasm. The catalysed reaction is (R)-4'-phosphopantetheine + ATP + H(+) = 3'-dephospho-CoA + diphosphate. It functions in the pathway cofactor biosynthesis; coenzyme A biosynthesis; CoA from (R)-pantothenate: step 4/5. Its function is as follows. Reversibly transfers an adenylyl group from ATP to 4'-phosphopantetheine, yielding dephospho-CoA (dPCoA) and pyrophosphate. The sequence is that of Phosphopantetheine adenylyltransferase from Streptococcus pneumoniae (strain JJA).